The primary structure comprises 142 residues: Large ribosomal subunit protein uL13 (142 aa).

The protein belongs to the universal ribosomal protein uL13 family. As to quaternary structure, part of the 50S ribosomal subunit.

Functionally, this protein is one of the early assembly proteins of the 50S ribosomal subunit, although it is not seen to bind rRNA by itself. It is important during the early stages of 50S assembly. The polypeptide is Large ribosomal subunit protein uL13 (Ectopseudomonas mendocina (strain ymp) (Pseudomonas mendocina)).